The following is a 397-amino-acid chain: Lysophospholipid transporter LplT (397 aa).

Topologically, residues 1–17 (MSESVHTNTSLWSKGMK) are periplasmic. A helical transmembrane segment spans residues 18 to 38 (AVIVAQFLSAFGDNALLFATL). Residues 39–52 (ALLKAQFYPEWSQP) lie on the Cytoplasmic side of the membrane. A helical transmembrane segment spans residues 53–73 (ILQMVFVGAYILFAPFVGQVA). Residues 74 to 90 (DSFAKGRVMMFANGLKL) lie on the Periplasmic side of the membrane. Residues 91–111 (LGAASICFGINPFLGYTLVGV) traverse the membrane as a helical segment. Residues 112-144 (GAAAYSPAKYGILGELTTGSKLVKANGLMEAST) are Cytoplasmic-facing. A helical transmembrane segment spans residues 145 to 165 (IAAILLGSVAGGVLADWHVLV). Position 166 (alanine 166) is a topological domain, periplasmic. The helical transmembrane segment at 167 to 187 (LAACALAYGGAVVANIYIPKL) threads the bilayer. Residues 188–226 (AAARPGQSWNLINMTRSFLNACTSLWRNGETRFSLVGTS) lie on the Cytoplasmic side of the membrane. Residues 227–247 (LFWGAGVTLRFLLVLWVPVAL) traverse the membrane as a helical segment. Residues 248-256 (GITDNATPT) lie on the Periplasmic side of the membrane. Residues 257 to 277 (YLNAMVAIGIVVGAGAAAKLV) form a helical membrane-spanning segment. At 278 to 280 (TLE) the chain is on the cytoplasmic side. Residues 281 to 301 (TVSRCMPAGILIGVVVLIFSL) traverse the membrane as a helical segment. Topologically, residues 302-304 (QHE) are periplasmic. Residues 305–325 (QLPAYALLMLIGVLGGFFVVP) form a helical membrane-spanning segment. The Cytoplasmic portion of the chain corresponds to 326 to 343 (LNALLQERGKKSVGAGNA). The helical transmembrane segment at 344–364 (IAVQNLGENSAMLLMLGIYSL) threads the bilayer. Topologically, residues 365–366 (AV) are periplasmic. Residues 367-387 (MVGIPVVPIGIGFGALFALAI) form a helical membrane-spanning segment. Residues 388-397 (TALWIWQRRH) are Cytoplasmic-facing.

This sequence belongs to the major facilitator superfamily. LplT (TC 2.A.1.42) family.

It is found in the cell inner membrane. Catalyzes the facilitated diffusion of 2-acyl-glycero-3-phosphoethanolamine (2-acyl-GPE) into the cell. The chain is Lysophospholipid transporter LplT from Escherichia coli O157:H7 (strain EC4115 / EHEC).